The following is a 426-amino-acid chain: Serine--tRNA ligase (426 aa).

The disordered stretch occupies residues 103–129 (VPNLPDDSVPTGKDENDNPEIRRWGTP). Over residues 114-125 (GKDENDNPEIRR) the composition is skewed to basic and acidic residues. Position 230–232 (230–232 (TAE)) interacts with L-serine. Position 261–263 (261–263 (RSE)) interacts with ATP. E284 contributes to the L-serine binding site. ATP is bound at residue 348 to 351 (EISS). S384 is an L-serine binding site.

The protein belongs to the class-II aminoacyl-tRNA synthetase family. Type-1 seryl-tRNA synthetase subfamily. As to quaternary structure, homodimer. The tRNA molecule binds across the dimer.

It is found in the cytoplasm. The catalysed reaction is tRNA(Ser) + L-serine + ATP = L-seryl-tRNA(Ser) + AMP + diphosphate + H(+). It carries out the reaction tRNA(Sec) + L-serine + ATP = L-seryl-tRNA(Sec) + AMP + diphosphate + H(+). Its pathway is aminoacyl-tRNA biosynthesis; selenocysteinyl-tRNA(Sec) biosynthesis; L-seryl-tRNA(Sec) from L-serine and tRNA(Sec): step 1/1. Functionally, catalyzes the attachment of serine to tRNA(Ser). Is also able to aminoacylate tRNA(Sec) with serine, to form the misacylated tRNA L-seryl-tRNA(Sec), which will be further converted into selenocysteinyl-tRNA(Sec). The sequence is that of Serine--tRNA ligase from Dichelobacter nodosus (strain VCS1703A).